The chain runs to 242 residues: Ribonuclease PH (242 aa).

Phosphate is bound by residues arginine 89 and 127–129; that span reads GTR.

The protein belongs to the RNase PH family. In terms of assembly, homohexameric ring arranged as a trimer of dimers.

The enzyme catalyses tRNA(n+1) + phosphate = tRNA(n) + a ribonucleoside 5'-diphosphate. Functionally, phosphorolytic 3'-5' exoribonuclease that plays an important role in tRNA 3'-end maturation. Removes nucleotide residues following the 3'-CCA terminus of tRNAs; can also add nucleotides to the ends of RNA molecules by using nucleoside diphosphates as substrates, but this may not be physiologically important. Probably plays a role in initiation of 16S rRNA degradation (leading to ribosome degradation) during starvation. The sequence is that of Ribonuclease PH from Neisseria meningitidis serogroup B (strain ATCC BAA-335 / MC58).